The primary structure comprises 216 residues: Probable methylthioribulose-1-phosphate dehydratase (216 aa).

Cys87 contributes to the substrate binding site. Residues His105 and His107 each coordinate Zn(2+). Residue Glu129 is the Proton donor/acceptor of the active site.

The protein belongs to the aldolase class II family. MtnB subfamily. The cofactor is Zn(2+).

It is found in the cytoplasm. It catalyses the reaction 5-(methylsulfanyl)-D-ribulose 1-phosphate = 5-methylsulfanyl-2,3-dioxopentyl phosphate + H2O. It functions in the pathway amino-acid biosynthesis; L-methionine biosynthesis via salvage pathway; L-methionine from S-methyl-5-thio-alpha-D-ribose 1-phosphate: step 2/6. Catalyzes the dehydration of methylthioribulose-1-phosphate (MTRu-1-P) into 2,3-diketo-5-methylthiopentyl-1-phosphate (DK-MTP-1-P). The protein is Probable methylthioribulose-1-phosphate dehydratase of Drosophila persimilis (Fruit fly).